A 118-amino-acid chain; its full sequence is MKAISPVRSMSSCYQAVCCLSEQSLSIARGSSLKGAGIDETMGLLYDMNGCYSKLKELVPGIPQGSKLSQVEILQHVIDYIFDLQIVLGEDQQQNSILNLQKSDFSELATQGDARVCH.

The 53-residue stretch at 32 to 84 (SLKGAGIDETMGLLYDMNGCYSKLKELVPGIPQGSKLSQVEILQHVIDYIFDL) folds into the bHLH domain.

Homodimer. Heterodimer with other HLH proteins. Interacts (via HLH domain) with the bHLH protein hes4/hairy2 (via Orange domain). Interacts with stat3.

It localises to the nucleus. Transcriptional regulator (lacking a basic DNA binding domain) which negatively regulates the basic helix-loop-helix (bHLH) transcription factors by forming heterodimers and inhibiting their DNA binding and transcriptional activity. Influences cell fate decisions in the embryo by sequestering and blocking the activity of the bHLH transcription factors that control these decisions. Inhibits the binding of myogenic bHLH-containing complexes to E-box DNA, thereby preventing activation of muscle-specific target genes. Also inhibits the activity of neurogenic factor neurod1/neuroD. Plays a role in cell cycle progression and survival of neural crest progenitors; binding to either hes4-B/hairy2b or stat3 blocks the formation of transcription factor complexes and the repressor function of hes4-B/hairy2B, to allow neural crest progenitors to differentiate. May play a role in the regulation of the circadian rhythm. The polypeptide is DNA-binding protein inhibitor ID-3-B (id3-b) (Xenopus laevis (African clawed frog)).